The following is a 328-amino-acid chain: D-cysteine desulfhydrase (328 aa).

At Lys51 the chain carries N6-(pyridoxal phosphate)lysine.

It belongs to the ACC deaminase/D-cysteine desulfhydrase family. As to quaternary structure, homodimer. Requires pyridoxal 5'-phosphate as cofactor.

It carries out the reaction D-cysteine + H2O = hydrogen sulfide + pyruvate + NH4(+) + H(+). Functionally, catalyzes the alpha,beta-elimination reaction of D-cysteine and of several D-cysteine derivatives. It could be a defense mechanism against D-cysteine. The chain is D-cysteine desulfhydrase from Salmonella choleraesuis (strain SC-B67).